The primary structure comprises 254 residues: Leucyl/phenylalanyl-tRNA--protein transferase (254 aa).

A compositionally biased stretch (pro residues) spans 1 to 10 (MSSQPPPLPW). Residues 1–28 (MSSQPPPLPWLDPNQDFPPTSQAWDENS) are disordered.

This sequence belongs to the L/F-transferase family.

It is found in the cytoplasm. The catalysed reaction is N-terminal L-lysyl-[protein] + L-leucyl-tRNA(Leu) = N-terminal L-leucyl-L-lysyl-[protein] + tRNA(Leu) + H(+). It catalyses the reaction N-terminal L-arginyl-[protein] + L-leucyl-tRNA(Leu) = N-terminal L-leucyl-L-arginyl-[protein] + tRNA(Leu) + H(+). The enzyme catalyses L-phenylalanyl-tRNA(Phe) + an N-terminal L-alpha-aminoacyl-[protein] = an N-terminal L-phenylalanyl-L-alpha-aminoacyl-[protein] + tRNA(Phe). Functionally, functions in the N-end rule pathway of protein degradation where it conjugates Leu, Phe and, less efficiently, Met from aminoacyl-tRNAs to the N-termini of proteins containing an N-terminal arginine or lysine. The protein is Leucyl/phenylalanyl-tRNA--protein transferase of Albidiferax ferrireducens (strain ATCC BAA-621 / DSM 15236 / T118) (Rhodoferax ferrireducens).